The following is a 346-amino-acid chain: Eukaryotic translation initiation factor 3 subunit I (346 aa).

5 WD repeats span residues 8-47 (GHER…RLGT), 50-89 (GHNG…IAHS), 150-189 (EGCA…CLEI), 192-233 (LHKQ…KTYE), and 289-328 (DHFG…FDFK).

It belongs to the eIF-3 subunit I family. Component of the eukaryotic translation initiation factor 3 (eIF-3) complex.

It localises to the cytoplasm. Component of the eukaryotic translation initiation factor 3 (eIF-3) complex, which is involved in protein synthesis of a specialized repertoire of mRNAs and, together with other initiation factors, stimulates binding of mRNA and methionyl-tRNAi to the 40S ribosome. The eIF-3 complex specifically targets and initiates translation of a subset of mRNAs involved in cell proliferation. This chain is Eukaryotic translation initiation factor 3 subunit I, found in Eremothecium gossypii (strain ATCC 10895 / CBS 109.51 / FGSC 9923 / NRRL Y-1056) (Yeast).